A 194-amino-acid polypeptide reads, in one-letter code: Imidazoleglycerol-phosphate dehydratase (194 aa).

The protein belongs to the imidazoleglycerol-phosphate dehydratase family.

The protein localises to the cytoplasm. The catalysed reaction is D-erythro-1-(imidazol-4-yl)glycerol 3-phosphate = 3-(imidazol-4-yl)-2-oxopropyl phosphate + H2O. It functions in the pathway amino-acid biosynthesis; L-histidine biosynthesis; L-histidine from 5-phospho-alpha-D-ribose 1-diphosphate: step 6/9. The polypeptide is Imidazoleglycerol-phosphate dehydratase (Limosilactobacillus fermentum (strain NBRC 3956 / LMG 18251) (Lactobacillus fermentum)).